Reading from the N-terminus, the 117-residue chain is NADH-quinone oxidoreductase subunit A (117 aa).

A run of 3 helical transmembrane segments spans residues 4–24, 64–84, and 86–106; these read WIGVALFIVVGIVFGAGGMLT, LMFVIFDVEVIYLYPWAVSFV, and LGLAGLIKMFLFIFILVLGLW.

The protein belongs to the complex I subunit 3 family. NDH-1 is composed of 14 different subunits. Subunits NuoA, H, J, K, L, M, N constitute the membrane sector of the complex.

It localises to the cell membrane. It carries out the reaction a quinone + NADH + 5 H(+)(in) = a quinol + NAD(+) + 4 H(+)(out). Functionally, NDH-1 shuttles electrons from NADH, via FMN and iron-sulfur (Fe-S) centers, to quinones in the respiratory chain. The immediate electron acceptor for the enzyme in this species is believed to be a menaquinone. Couples the redox reaction to proton translocation (for every two electrons transferred, four hydrogen ions are translocated across the cytoplasmic membrane), and thus conserves the redox energy in a proton gradient. This chain is NADH-quinone oxidoreductase subunit A, found in Desulforamulus reducens (strain ATCC BAA-1160 / DSM 100696 / MI-1) (Desulfotomaculum reducens).